The sequence spans 620 residues: Coenzyme F420-dependent sulfite reductase (620 aa).

In terms of domain architecture, 4Fe-4S ferredoxin-type 1 spans 6–35; sequence LNEIVDSGVCARCGTCTIVCPNGILTFDER. [4Fe-4S] cluster contacts are provided by C15, C18, C21, C25, C428, C434, C468, C472, C495, C498, C501, C505, C524, C527, C530, and C534. Position 472 (C472) interacts with siroheme. 4Fe-4S ferredoxin-type domains follow at residues 486–515 and 520–544; these read KYPK…IRGE and NYNV…VKEE.

Belongs to the nitrite and sulfite reductase 4Fe-4S domain family. The cofactor is [4Fe-4S] cluster. Siroheme is required as a cofactor.

It catalyses the reaction 3 oxidized coenzyme F420-(gamma-L-Glu)(n) + hydrogen sulfide + 3 H2O + 2 H(+) = 3 reduced coenzyme F420-(gamma-L-Glu)(n) + sulfite. Its function is as follows. Catalyzes the reduction of sulfite to sulfide using reduced F420 as the electron source. Involved in sulfite detoxification and assimilation. Cannot use NADH or NADPH. The protein is Coenzyme F420-dependent sulfite reductase of Methanocaldococcus jannaschii (strain ATCC 43067 / DSM 2661 / JAL-1 / JCM 10045 / NBRC 100440) (Methanococcus jannaschii).